Consider the following 514-residue polypeptide: Ras-GEF domain-containing family member 1B-A (514 aa).

The region spanning 76–206 (HDNNLISGSL…MTQTLIRKLT (131 aa)) is the N-terminal Ras-GEF domain. The Ras-GEF domain occupies 246–494 (DPFTLAQQLT…YLASYESEGP (249 aa)).

In terms of tissue distribution, detected in oocytes, and in embryos at 4 to 120 hours post-fertilization (hpf). Detected along marginal blastomeres at early epiboly stage and throughout the margin at the onset of gastrulation. At 60% epiboly, strongest expression is found in the dorsal shield region and is restricted to the epiblast. Detected in the anterior border of the presomitic mesoderm at the end of epiboly. Detected in adaxial cells, in the somites and in the nervous system during somitogenesis. Detected in diencephalon and hindbrain and in cells surrounding the notochord, including adaxial cells and ventral mesendoderm, in 15-somite stage embryos. At 48 hpf, detected mainly in the brain.

In terms of biological role, guanine nucleotide exchange factor (GEF) for Ras family proteins (in vitro). The polypeptide is Ras-GEF domain-containing family member 1B-A (rasgef1ba) (Danio rerio (Zebrafish)).